The chain runs to 70 residues: Ubiquinol-cytochrome c reductase complex assembly factor 5 (70 aa).

Over Met1–Arg19 the chain is Mitochondrial matrix. Residues Phe20–Ile41 form a helical membrane-spanning segment. Residues Lys42–Glu70 are Mitochondrial intermembrane-facing.

This sequence belongs to the UQCC5 family. In terms of assembly, associates with the mitochondrial ribosome. Interacts with UQCC6. Interacts with MT-CYB; interacts with newly synthesizes MT-CYB. Forms a complex, named COMB/coordinator of mitochondrial CYTB biogenesis, composed of UQCC1, UQCC2, UQCC4, UQCC5 and UQCC6; regulates MT-CYB synthesis and promotes its membrane insertion.

It is found in the mitochondrion inner membrane. Its function is as follows. Required for the assembly and stability of the mitochondrial ubiquinol-cytochrome c reductase complex (complex III (CIII) or cytochrome b-c1 complex), a multisubunit transmembrane complex that is part of the mitochondrial electron transport chain (ETC) which drives oxidative phosphorylation. Mediates early complex III biogenesis. Participates in regulating the levels of electron transport chain proteins, and therefore energy supply, in response to changes in energy demand. Also involved in the first steps of cytochrome c oxidase complex (complex IV) assembly. This chain is Ubiquinol-cytochrome c reductase complex assembly factor 5, found in Homo sapiens (Human).